The following is a 196-amino-acid chain: Glycerol-3-phosphate acyltransferase (196 aa).

A run of 5 helical transmembrane segments spans residues 4-24 (LTLT…AILV), 56-76 (ATVL…AYFL), 80-100 (SLYL…PIFF), 114-134 (TLLP…VLVV), and 155-175 (VYFL…LILF).

The protein belongs to the PlsY family. As to quaternary structure, probably interacts with PlsX.

It is found in the cell inner membrane. It catalyses the reaction an acyl phosphate + sn-glycerol 3-phosphate = a 1-acyl-sn-glycero-3-phosphate + phosphate. It participates in lipid metabolism; phospholipid metabolism. In terms of biological role, catalyzes the transfer of an acyl group from acyl-phosphate (acyl-PO(4)) to glycerol-3-phosphate (G3P) to form lysophosphatidic acid (LPA). This enzyme utilizes acyl-phosphate as fatty acyl donor, but not acyl-CoA or acyl-ACP. The chain is Glycerol-3-phosphate acyltransferase from Colwellia psychrerythraea (strain 34H / ATCC BAA-681) (Vibrio psychroerythus).